A 354-amino-acid chain; its full sequence is Guanine nucleotide-binding protein G(i) subunit alpha-1 (354 aa).

Gly-2 carries N-myristoyl glycine lipidation. Cys-3 carries the S-palmitoyl cysteine lipid modification. In terms of domain architecture, G-alpha spans 32-354 (REVKLLLLGA…KNNLKDCGLF (323 aa)). Residues 35 to 48 (KLLLLGAGESGKST) are G1 motif. Residues 43–48 (ESGKST), 150–151 (DS), and 175–178 (LRTR) each bind GTP. Position 47 (Ser-47) interacts with Mg(2+). Residues 173–181 (DVLRTRVKT) are G2 motif. Thr-181 serves as a coordination point for Mg(2+). Residues 196 to 205 (FKMFDVGGQR) are G3 motif. Residues 200–204 (DVGGQ), 269–272 (NKKD), and Ala-326 contribute to the GTP site. The interval 265 to 272 (ILFLNKKD) is G4 motif. A G5 motif region spans residues 324–329 (TCATDT).

The protein belongs to the G-alpha family. G(i/o/t/z) subfamily. Heterotrimeric G proteins are composed of 3 units; alpha, beta and gamma. The alpha chain contains the guanine nucleotide binding site. Part of a spindle orientation complex. Identified in complex with the beta subunit GNB1 and the gamma subunit GNG1. Identified in complex with the beta subunit GNB1 and the gamma subunit GNG2. GTP binding causes dissociation of the heterotrimer, liberating the individual subunits so that they can interact with downstream effector proteins. Myristoylation at Gly-2 is required for membrane anchoring before palmitoylation. In terms of processing, palmitoylation at Cys-3 varies with membrane lipid composition.

It localises to the nucleus. The protein resides in the cytoplasm. The protein localises to the cell membrane. It is found in the cytoskeleton. Its subcellular location is the microtubule organizing center. It localises to the centrosome. The protein resides in the cell cortex. The protein localises to the membrane. It carries out the reaction GTP + H2O = GDP + phosphate + H(+). In terms of biological role, guanine nucleotide-binding proteins (G proteins) function as transducers downstream of G protein-coupled receptors (GPCRs) in numerous signaling cascades. The alpha chain contains the guanine nucleotide binding site and alternates between an active, GTP-bound state and an inactive, GDP-bound state. Signaling by an activated GPCR promotes GDP release and GTP binding. The alpha subunit has a low GTPase activity that converts bound GTP to GDP, thereby terminating the signal. Both GDP release and GTP hydrolysis are modulated by numerous regulatory proteins. Signaling is mediated via effector proteins, such as adenylate cyclase. Inhibits adenylate cyclase activity, leading to decreased intracellular cAMP levels. Required for cortical dynein-dynactin complex recruitment during metaphase. The protein is Guanine nucleotide-binding protein G(i) subunit alpha-1 (gnai1) of Xenopus laevis (African clawed frog).